The chain runs to 429 residues: Enolase (429 aa).

Gln-163 is a binding site for (2R)-2-phosphoglycerate. Glu-205 acts as the Proton donor in catalysis. Mg(2+) is bound by residues Asp-242, Glu-286, and Asp-313. (2R)-2-phosphoglycerate contacts are provided by Lys-338, Arg-367, Ser-368, and Lys-389. Lys-338 (proton acceptor) is an active-site residue.

This sequence belongs to the enolase family. Mg(2+) serves as cofactor.

It localises to the cytoplasm. Its subcellular location is the secreted. The protein resides in the cell surface. It carries out the reaction (2R)-2-phosphoglycerate = phosphoenolpyruvate + H2O. It functions in the pathway carbohydrate degradation; glycolysis; pyruvate from D-glyceraldehyde 3-phosphate: step 4/5. In terms of biological role, catalyzes the reversible conversion of 2-phosphoglycerate (2-PG) into phosphoenolpyruvate (PEP). It is essential for the degradation of carbohydrates via glycolysis. The sequence is that of Enolase from Thermoanaerobacter sp. (strain X514).